The sequence spans 294 residues: Glutamyl-Q tRNA(Asp) synthetase (294 aa).

L-glutamate contacts are provided by residues 8 to 12 and Glu44; that span reads RFAPT. Positions 11–21 match the 'HIGH' region motif; that stretch reads PTPSGYLHFGS. Residues Cys100, Cys102, Tyr114, and Cys118 each contribute to the Zn(2+) site. Tyr171 and Arg189 together coordinate L-glutamate. A 'KMSKS' region motif is present at residues 227–231; the sequence is KLGKS. ATP is bound at residue Lys230.

This sequence belongs to the class-I aminoacyl-tRNA synthetase family. GluQ subfamily. The cofactor is Zn(2+).

Its function is as follows. Catalyzes the tRNA-independent activation of glutamate in presence of ATP and the subsequent transfer of glutamate onto a tRNA(Asp). Glutamate is transferred on the 2-amino-5-(4,5-dihydroxy-2-cyclopenten-1-yl) moiety of the queuosine in the wobble position of the QUC anticodon. The polypeptide is Glutamyl-Q tRNA(Asp) synthetase (Ectopseudomonas mendocina (strain ymp) (Pseudomonas mendocina)).